The following is a 442-amino-acid chain: Putative major teichoic acid biosynthesis protein C (442 aa).

Its function is as follows. Unknown. Might be involved in poly(glycerol phosphate) teichoic acid biosynthesis. The protein is Putative major teichoic acid biosynthesis protein C (tagC) of Bacillus subtilis (strain 168).